The primary structure comprises 535 residues: Dipeptide-binding protein (535 aa).

Positions 1-28 (MRISLKKSGMLKLGLSLVAMTVAASVQA) are cleaved as a signal peptide. Cys-34 and Cys-262 form a disulfide bridge. Residues 48 to 50 (TSG), 383 to 385 (RPY), and 433 to 436 (WTGD) each bind glycyl-L-leucine. Cys-450 and Cys-463 are oxidised to a cystine.

It belongs to the bacterial solute-binding protein 5 family. As to quaternary structure, the complex is composed of two ATP-binding proteins (DppD and DppF), two transmembrane proteins (DppB and DppC) and a solute-binding protein (DppA).

It localises to the periplasm. Its activity is regulated as follows. Heme binding is inhibited by dipeptide. Its function is as follows. Part of the ABC transporter DppABCDF involved in dipeptide transport. Binds dipeptides and accepts a wide range of side chains, including small neutral, bulky hydrophobic, and positively and negatively charged groups. Tripeptides are poor substrates. DppA alone controls the specificity of the Dpp transporter. In addition, plays a role in chemotaxis toward peptides via interaction with the chemotaxis protein Tap. Functionally, binds heme. When a foreign outer membrane heme receptor is expressed in E.coli, DppABCDF can also transport heme and its precursor, 5-aminolevulinic acid (ALA), from the periplasm into the cytoplasm. The sequence is that of Dipeptide-binding protein from Escherichia coli (strain K12).